A 126-amino-acid chain; its full sequence is MPEPAKSAPAPKKGSKKAVTKAQKKDGKKRKRSRKESYSIYVYKVLKQVHPDTGISSKAMGIMNSFVNDIFERIAGEASRLAHYNKRSTITSREIQTAVRLLLPGELAKHAVSEGTKAVTKYTSAK.

Residues 1–12 (MPEPAKSAPAPK) show a composition bias toward low complexity. The interval 1-35 (MPEPAKSAPAPKKGSKKAVTKAQKKDGKKRKRSRK) is disordered. Pro2 is modified (N-acetylproline). Position 3 is an ADP-ribosyl glutamic acid (Glu3). N6-(2-hydroxyisobutyryl)lysine; alternate is present on Lys6. Residue Lys6 is modified to N6-(beta-hydroxybutyryl)lysine; alternate. Position 6 is an N6-acetyllysine; alternate (Lys6). Lys6 carries the N6-butyryllysine; alternate modification. Lys6 bears the N6-crotonyllysine; alternate mark. Lys6 is subject to N6-lactoyllysine; alternate. Lys6 is covalently cross-linked (Glycyl lysine isopeptide (Lys-Gly) (interchain with G-Cter in SUMO2); alternate). Ser7 carries the post-translational modification ADP-ribosylserine. Lys12 is subject to N6-(beta-hydroxybutyryl)lysine; alternate. An N6-acetyllysine; alternate mark is found at Lys12 and Lys13. Lys12 and Lys13 each carry N6-crotonyllysine; alternate. Lys12 is modified (N6-lactoyllysine; alternate). An N6-(2-hydroxyisobutyryl)lysine; alternate modification is found at Lys13. A Phosphoserine; by STK4/MST1 modification is found at Ser15. Residues Lys16, Lys17, Lys21, and Lys24 each carry the N6-acetyllysine; alternate modification. Lys16, Lys17, Lys21, and Lys24 each carry N6-crotonyllysine; alternate. N6-lactoyllysine; alternate is present on residues Lys16, Lys17, Lys21, and Lys24. Residues Lys17 and Lys21 each carry the N6-(beta-hydroxybutyryl)lysine; alternate modification. Residue Lys17 is modified to N6-glutaryllysine; alternate. 2 positions are modified to N6-(2-hydroxyisobutyryl)lysine; alternate: Lys21 and Lys24. Lys21 is subject to N6-butyryllysine; alternate. A Glycyl lysine isopeptide (Lys-Gly) (interchain with G-Cter in SUMO2); alternate cross-link involves residue Lys21. The residue at position 25 (Lys25) is an N6-(2-hydroxyisobutyryl)lysine. Position 35 is an N6-(2-hydroxyisobutyryl)lysine; alternate (Lys35). Position 35 is an N6-(beta-hydroxybutyryl)lysine; alternate (Lys35). Lys35 is subject to N6-crotonyllysine; alternate. The residue at position 35 (Lys35) is an N6-glutaryllysine; alternate. An N6-succinyllysine; alternate modification is found at Lys35. Residue Lys35 forms a Glycyl lysine isopeptide (Lys-Gly) (interchain with G-Cter in ubiquitin); alternate linkage. Glu36 bears the PolyADP-ribosyl glutamic acid mark. Phosphoserine; by AMPK is present on Ser37. Lys44, Lys47, and Lys58 each carry N6-(2-hydroxyisobutyryl)lysine; alternate. Lys44 carries the post-translational modification N6-lactoyllysine; alternate. An N6-glutaryllysine; alternate mark is found at Lys44 and Lys47. Residue Lys47 is modified to N6-methyllysine; alternate. Lys58 bears the N6,N6-dimethyllysine; alternate mark. A Dimethylated arginine modification is found at Arg80. The residue at position 86 (Lys86) is an N6-(2-hydroxyisobutyryl)lysine; alternate. Lys86 is subject to N6-(beta-hydroxybutyryl)lysine; alternate. The residue at position 86 (Lys86) is an N6-acetyllysine; alternate. Lys86 carries the N6-lactoyllysine; alternate modification. At Lys86 the chain carries N6,N6,N6-trimethyllysine; alternate. Residues Arg87 and Arg93 each carry the omega-N-methylarginine modification. An N6-(2-hydroxyisobutyryl)lysine; alternate modification is found at Lys109. Lys109 is subject to N6-lactoyllysine; alternate. N6-glutaryllysine; alternate is present on Lys109. The residue at position 109 (Lys109) is an N6-methyllysine; alternate. Residue Ser113 is glycosylated (O-linked (GlcNAc) serine). Thr116 is subject to Phosphothreonine. 2 positions are modified to N6-(2-hydroxyisobutyryl)lysine; alternate: Lys117 and Lys121. Lys117 and Lys121 each carry N6-(beta-hydroxybutyryl)lysine; alternate. An N6-lactoyllysine; alternate mark is found at Lys117 and Lys121. Lys117 and Lys121 each carry N6-glutaryllysine; alternate. 2 positions are modified to N6-succinyllysine; alternate: Lys117 and Lys121. Lys117 carries the N6-malonyllysine; alternate modification. N6-methylated lysine; alternate is present on Lys117. Residue Lys121 forms a Glycyl lysine isopeptide (Lys-Gly) (interchain with G-Cter in ubiquitin); alternate linkage.

The protein belongs to the histone H2B family. The nucleosome is a histone octamer containing two molecules each of H2A, H2B, H3 and H4 assembled in one H3-H4 heterotetramer and two H2A-H2B heterodimers. The octamer wraps approximately 147 bp of DNA. Heterodimer H2BC11 and H2AZ1 interacts with VPS72 (via N-terminal domain). Monoubiquitination at Lys-35 (H2BK34Ub) by the MSL1/MSL2 dimer is required for histone H3 'Lys-4' (H3K4me) and 'Lys-79' (H3K79me) methylation and transcription activation at specific gene loci, such as HOXA9 and MEIS1 loci. Similarly, monoubiquitination at Lys-121 (H2BK120Ub) by the RNF20/40 complex gives a specific tag for epigenetic transcriptional activation and is also prerequisite for histone H3 'Lys-4' and 'Lys-79' methylation. It also functions cooperatively with the FACT dimer to stimulate elongation by RNA polymerase II. H2BK120Ub also acts as a regulator of mRNA splicing: deubiquitination by USP49 is required for efficient cotranscriptional splicing of a large set of exons. Post-translationally, phosphorylation at Ser-37 (H2BS36ph) by AMPK in response to stress promotes transcription. Phosphorylated on Ser-15 (H2BS14ph) by STK4/MST1 during apoptosis; which facilitates apoptotic chromatin condensation. Also phosphorylated on Ser-15 in response to DNA double strand breaks (DSBs), and in correlation with somatic hypermutation and immunoglobulin class-switch recombination. In terms of processing, glcNAcylation at Ser-113 promotes monoubiquitination of Lys-121. It fluctuates in response to extracellular glucose, and associates with transcribed genes. ADP-ribosylated by PARP1 or PARP2 on Ser-7 (H2BS6ADPr) in response to DNA damage. H2BS6ADPr promotes recruitment of CHD1L. Mono-ADP-ribosylated on Glu-3 (H2BE2ADPr) by PARP3 in response to single-strand breaks. Poly ADP-ribosylation on Glu-36 (H2BE35ADPr) by PARP1 regulates adipogenesis: it inhibits phosphorylation at Ser-37 (H2BS36ph), thereby blocking expression of pro-adipogenetic genes. Post-translationally, crotonylation (Kcr) is specifically present in male germ cells and marks testis-specific genes in post-meiotic cells, including X-linked genes that escape sex chromosome inactivation in haploid cells. Crotonylation marks active promoters and enhancers and confers resistance to transcriptional repressors. It is also associated with post-meiotically activated genes on autosomes. In terms of processing, lactylated in macrophages by EP300/P300 by using lactoyl-CoA directly derived from endogenous or exogenous lactate, leading to stimulates gene transcription.

The protein localises to the nucleus. It is found in the chromosome. In terms of biological role, core component of nucleosome. Nucleosomes wrap and compact DNA into chromatin, limiting DNA accessibility to the cellular machineries which require DNA as a template. Histones thereby play a central role in transcription regulation, DNA repair, DNA replication and chromosomal stability. DNA accessibility is regulated via a complex set of post-translational modifications of histones, also called histone code, and nucleosome remodeling. Has broad antibacterial activity. May contribute to the formation of the functional antimicrobial barrier of the colonic epithelium, and to the bactericidal activity of amniotic fluid. This chain is Histone H2B type 1-J, found in Homo sapiens (Human).